The following is a 142-amino-acid chain: Spliceosomal protein DIB1 (142 aa).

It belongs to the DIM1 family. As to quaternary structure, component of the 25S [U4/U6.U5] tri-snRNP.

The protein localises to the nucleus. Its function is as follows. Essential role in pre-mRNA splicing. Also essential for entry into mitosis (G2/M progression) as well as for chromosome segregation during mitosis. In Candida glabrata (strain ATCC 2001 / BCRC 20586 / JCM 3761 / NBRC 0622 / NRRL Y-65 / CBS 138) (Yeast), this protein is Spliceosomal protein DIB1 (DIB1).